The sequence spans 132 residues: Small ribosomal subunit protein uS8 (132 aa).

The protein belongs to the universal ribosomal protein uS8 family. Part of the 30S ribosomal subunit. Contacts proteins S5 and S12.

In terms of biological role, one of the primary rRNA binding proteins, it binds directly to 16S rRNA central domain where it helps coordinate assembly of the platform of the 30S subunit. The sequence is that of Small ribosomal subunit protein uS8 from Oceanobacillus iheyensis (strain DSM 14371 / CIP 107618 / JCM 11309 / KCTC 3954 / HTE831).